Consider the following 311-residue polypeptide: Nudix hydrolase 9 (311 aa).

Residues 131 to 298 (SSPLGNGAVI…GFALYELMLQ (168 aa)) enclose the Nudix hydrolase domain. A Nudix box motif is present at residues 192–213 (LNKKVTQEMFDSIICEVVEETG). Positions 207 and 211 each coordinate Mg(2+).

The protein belongs to the Nudix hydrolase family. The cofactor is Mg(2+). Requires Mn(2+) as cofactor. In terms of tissue distribution, expressed in roots, stems and leaves.

Probably mediates the hydrolysis of some nucleoside diphosphate derivatives. In Arabidopsis thaliana (Mouse-ear cress), this protein is Nudix hydrolase 9 (NUDT9).